Here is a 292-residue protein sequence, read N- to C-terminus: Nitrogenase iron protein 2 (292 aa).

12 to 19 (GKGGIGKS) provides a ligand contact to ATP. Cys97 contacts [4Fe-4S] cluster. The residue at position 100 (Arg100) is an ADP-ribosylarginine; by dinitrogenase reductase ADP-ribosyltransferase. Residue Cys133 coordinates [4Fe-4S] cluster.

Belongs to the NifH/BchL/ChlL family. In terms of assembly, homodimer. [4Fe-4S] cluster is required as a cofactor. Post-translationally, the reversible ADP-ribosylation of Arg-100 inactivates the nitrogenase reductase and regulates nitrogenase activity.

It catalyses the reaction N2 + 8 reduced [2Fe-2S]-[ferredoxin] + 16 ATP + 16 H2O = H2 + 8 oxidized [2Fe-2S]-[ferredoxin] + 2 NH4(+) + 16 ADP + 16 phosphate + 6 H(+). In terms of biological role, the key enzymatic reactions in nitrogen fixation are catalyzed by the nitrogenase complex, which has 2 components: the iron protein and the molybdenum-iron protein. The protein is Nitrogenase iron protein 2 (nifH2) of Paenibacillus durus (Paenibacillus azotofixans).